The primary structure comprises 44 residues: Photosystem I reaction center subunit IX (44 aa).

The helical transmembrane segment at 7 to 27 (YLSVAPVLSTLWFGALAGLLI) threads the bilayer.

The protein belongs to the PsaJ family.

It localises to the plastid. The protein localises to the chloroplast thylakoid membrane. Its function is as follows. May help in the organization of the PsaE and PsaF subunits. The polypeptide is Photosystem I reaction center subunit IX (Coffea arabica (Arabian coffee)).